A 210-amino-acid chain; its full sequence is 3 beta-hydroxysteroid dehydrogenase/Delta 5--&gt;4-isomerase (210 aa).

Tyr-29 acts as the Proton acceptor in catalysis. Lys-33 is an NAD(+) binding site.

This sequence belongs to the 3-beta-HSD family.

The enzyme catalyses a 3beta-hydroxy-Delta(5)-steroid + NAD(+) = a 3-oxo-Delta(5)-steroid + NADH + H(+). The catalysed reaction is a 3-oxo-Delta(5)-steroid = a 3-oxo-Delta(4)-steroid. The protein operates within lipid metabolism; steroid biosynthesis. Functionally, catalyzes the oxidative conversion of Delta(5)-ene-3-beta-hydroxy steroid, and the oxidative conversion of ketosteroids. The 3-beta-HSD enzymatic system plays a crucial role in the biosynthesis of all classes of hormonal steroids. During viral infection, steroid production contributes to virulence by inhibiting the host inflammatory response. The protein is 3 beta-hydroxysteroid dehydrogenase/Delta 5--&gt;4-isomerase (OPG174) of Variola virus (isolate Human/India/Ind3/1967) (VARV).